We begin with the raw amino-acid sequence, 598 residues long: NADH-quinone oxidoreductase subunit C/D (598 aa).

The interval 1-189 (MTDQIAQNSA…DPYVLTKQKE (189 aa)) is NADH dehydrogenase I subunit C. An NADH dehydrogenase I subunit D region spans residues 213 to 598 (DFMFLNLGPN…IDFVMSDVDR (386 aa)).

It in the N-terminal section; belongs to the complex I 30 kDa subunit family. The protein in the C-terminal section; belongs to the complex I 49 kDa subunit family. As to quaternary structure, NDH-1 is composed of 13 different subunits. Subunits NuoB, CD, E, F, and G constitute the peripheral sector of the complex.

It localises to the cell inner membrane. The catalysed reaction is a quinone + NADH + 5 H(+)(in) = a quinol + NAD(+) + 4 H(+)(out). Functionally, NDH-1 shuttles electrons from NADH, via FMN and iron-sulfur (Fe-S) centers, to quinones in the respiratory chain. The immediate electron acceptor for the enzyme in this species is believed to be ubiquinone. Couples the redox reaction to proton translocation (for every two electrons transferred, four hydrogen ions are translocated across the cytoplasmic membrane), and thus conserves the redox energy in a proton gradient. This Proteus mirabilis (strain HI4320) protein is NADH-quinone oxidoreductase subunit C/D.